A 403-amino-acid polypeptide reads, in one-letter code: Ribosomal RNA large subunit methyltransferase I (403 aa).

Positions 9-88 (YPRLVLSKGR…ESIDIAFFTR (80 aa)) constitute a PUA domain.

Belongs to the methyltransferase superfamily. RlmI family.

Its subcellular location is the cytoplasm. The catalysed reaction is cytidine(1962) in 23S rRNA + S-adenosyl-L-methionine = 5-methylcytidine(1962) in 23S rRNA + S-adenosyl-L-homocysteine + H(+). Functionally, specifically methylates the cytosine at position 1962 (m5C1962) of 23S rRNA. The sequence is that of Ribosomal RNA large subunit methyltransferase I from Salmonella typhi.